The following is a 351-amino-acid chain: Thiamine-phosphate synthase (351 aa).

Residues 1 to 128 (MLNSNTKDHE…SKIASEIRYE (128 aa)) are unknown. The interval 129 to 351 (IYTVEIDLLS…MILKELSHEN (223 aa)) is thiamine-phosphate synthase. 4-amino-2-methyl-5-(diphosphooxymethyl)pyrimidine contacts are provided by residues 180–184 (QHRFK) and Asn212. Asp213 and Asp232 together coordinate Mg(2+). Ser251 contributes to the 4-amino-2-methyl-5-(diphosphooxymethyl)pyrimidine binding site. 277–279 (TTT) is a 2-[(2R,5Z)-2-carboxy-4-methylthiazol-5(2H)-ylidene]ethyl phosphate binding site. Lys280 provides a ligand contact to 4-amino-2-methyl-5-(diphosphooxymethyl)pyrimidine. Gly307 provides a ligand contact to 2-[(2R,5Z)-2-carboxy-4-methylthiazol-5(2H)-ylidene]ethyl phosphate.

Belongs to the thiamine-phosphate synthase family. The cofactor is Mg(2+).

The enzyme catalyses 2-[(2R,5Z)-2-carboxy-4-methylthiazol-5(2H)-ylidene]ethyl phosphate + 4-amino-2-methyl-5-(diphosphooxymethyl)pyrimidine + 2 H(+) = thiamine phosphate + CO2 + diphosphate. It carries out the reaction 2-(2-carboxy-4-methylthiazol-5-yl)ethyl phosphate + 4-amino-2-methyl-5-(diphosphooxymethyl)pyrimidine + 2 H(+) = thiamine phosphate + CO2 + diphosphate. The catalysed reaction is 4-methyl-5-(2-phosphooxyethyl)-thiazole + 4-amino-2-methyl-5-(diphosphooxymethyl)pyrimidine + H(+) = thiamine phosphate + diphosphate. It functions in the pathway cofactor biosynthesis; thiamine diphosphate biosynthesis; thiamine phosphate from 4-amino-2-methyl-5-diphosphomethylpyrimidine and 4-methyl-5-(2-phosphoethyl)-thiazole: step 1/1. Functionally, condenses 4-methyl-5-(beta-hydroxyethyl)thiazole monophosphate (THZ-P) and 2-methyl-4-amino-5-hydroxymethyl pyrimidine pyrophosphate (HMP-PP) to form thiamine monophosphate (TMP). The protein is Thiamine-phosphate synthase of Prochlorococcus marinus (strain AS9601).